Consider the following 544-residue polypeptide: Elongator complex protein 3 (544 aa).

In terms of domain architecture, Radical SAM core spans 79 to 369; sequence RTASGIAVVA…YRIQRDIPMP (291 aa). Positions 96, 106, and 109 each coordinate [4Fe-4S] cluster. Acetyl-CoA-binding positions include K161, 472–475, 495–497, and Y528; these read ELHV and FGT. The N-acetyltransferase domain occupies 393–544; that stretch reads TKCRDIRARE…LDGPYMSKWL (152 aa).

This sequence belongs to the ELP3 family. Component of the elongator complex. The cofactor is [4Fe-4S] cluster.

The protein localises to the cytoplasm. The catalysed reaction is uridine(34) in tRNA + acetyl-CoA + S-adenosyl-L-methionine + H2O = 5-(carboxymethyl)uridine(34) in tRNA + 5'-deoxyadenosine + L-methionine + CoA + 2 H(+). It functions in the pathway tRNA modification; 5-methoxycarbonylmethyl-2-thiouridine-tRNA biosynthesis. Functionally, catalytic tRNA acetyltransferase subunit of the elongator complex which is required for multiple tRNA modifications, including mcm5U (5-methoxycarbonylmethyl uridine), mcm5s2U (5-methoxycarbonylmethyl-2-thiouridine), and ncm5U (5-carbamoylmethyl uridine). In the elongator complex, acts as a tRNA uridine(34) acetyltransferase, which mediates formation of carboxymethyluridine in the wobble base at position 34 in tRNAs. This Schizosaccharomyces pombe (strain 972 / ATCC 24843) (Fission yeast) protein is Elongator complex protein 3.